We begin with the raw amino-acid sequence, 78 residues long: Pigment-dispersing hormone 1 peptides (78 aa).

The N-terminal stretch at 1 to 22 is a signal peptide; the sequence is MRSSVIVAVLVVVALAALLTQG. At Ala-75 the chain carries Alanine amide.

This sequence belongs to the arthropod PDH family. In terms of tissue distribution, eyestalk sinus gland.

It localises to the secreted. In terms of biological role, the pigment-dispersing hormone causes the migration of the distal retinal pigment into the proximal end of the pigment chromatophore cells and thus decreases the amount of light entering the retinulas. May also function as a neurotransmitter and/or neuromodulator. In Callinectes sapidus (Blue crab), this protein is Pigment-dispersing hormone 1 peptides (PDH1).